Reading from the N-terminus, the 276-residue chain is MKRSLFGRVWPNVTAVVLFIGLVFPVYWMFATAFKPTGDIISENPVWFPTDITFEHFKTATEADHFWTYVSNSLIVTVCAVVFSLVIALAGSFALARMRFKGRRGFIVGFMLAQMAPWEVMVIAIYMIVRDASMLNSLVPLTLFYMMMILPFTILTLRGFVAAVPKELEESAMVDGCTRAQAFRRVILPLLAPGLMSTSMFGFITAWNELPLVLVVNKEAESQTLPLWLTSFQTVFGDNWGATMAASSLFAIPILILFVYLQRKAVSGLTAGAVKG.

The next 6 membrane-spanning stretches (helical) occupy residues 14-34, 74-94, 105-125, 137-157, 186-206, and 241-261; these read TAVV…ATAF, LIVT…GSFA, GFIV…VIAI, SLVP…ILTL, VILP…FITA, and GATM…FVYL. The ABC transmembrane type-1 domain maps to 70–261; it reads VSNSLIVTVC…IPILILFVYL (192 aa).

It belongs to the binding-protein-dependent transport system permease family. In terms of assembly, the complex is composed of two ATP-binding proteins (MsiK), two transmembrane proteins (DasB and DasC) and a solute-binding protein (DasA).

Its subcellular location is the cell membrane. Its function is as follows. Part of the ABC transporter complex DasABC-MsiK involved in N,N'-diacetylchitobiose ((GlcNAc)2) uptake. Responsible for the translocation of the substrate across the membrane. This is Diacetylchitobiose uptake system permease protein DasC from Streptomyces coelicolor (strain ATCC BAA-471 / A3(2) / M145).